A 422-amino-acid polypeptide reads, in one-letter code: Inhibitory synaptic factor 2A (422 aa).

The disordered stretch occupies residues 143 to 163 (FLADSKEKSEAGPMEEPRPCS). Residues 146 to 160 (DSKEKSEAGPMEEPR) show a composition bias toward basic and acidic residues. The residue at position 177 (S177) is a Phosphoserine. Residues 344–370 (TEVVDLKAQLQVMENLISSSQETIKVL) are a coiled coil.

Belongs to the INSYN2 family. In terms of assembly, interacts with GPHN.

Its subcellular location is the postsynaptic density. Functionally, component of the protein machinery at the inhibitory synapses, probably acting as a scaffold. Inhibitory synapses dampen neuronal activity through postsynaptic hyperpolarization. This synaptic inhibition is fundamental for the functioning of the central nervous system, shaping and orchestrating the flow of information through neuronal networks to generate a precise neural code. This chain is Inhibitory synaptic factor 2A, found in Mus musculus (Mouse).